Consider the following 482-residue polypeptide: Aspartyl/glutamyl-tRNA(Asn/Gln) amidotransferase subunit B (482 aa).

This sequence belongs to the GatB/GatE family. GatB subfamily. In terms of assembly, heterotrimer of A, B and C subunits.

It catalyses the reaction L-glutamyl-tRNA(Gln) + L-glutamine + ATP + H2O = L-glutaminyl-tRNA(Gln) + L-glutamate + ADP + phosphate + H(+). It carries out the reaction L-aspartyl-tRNA(Asn) + L-glutamine + ATP + H2O = L-asparaginyl-tRNA(Asn) + L-glutamate + ADP + phosphate + 2 H(+). Functionally, allows the formation of correctly charged Asn-tRNA(Asn) or Gln-tRNA(Gln) through the transamidation of misacylated Asp-tRNA(Asn) or Glu-tRNA(Gln) in organisms which lack either or both of asparaginyl-tRNA or glutaminyl-tRNA synthetases. The reaction takes place in the presence of glutamine and ATP through an activated phospho-Asp-tRNA(Asn) or phospho-Glu-tRNA(Gln). In Thermotoga sp. (strain RQ2), this protein is Aspartyl/glutamyl-tRNA(Asn/Gln) amidotransferase subunit B.